A 442-amino-acid chain; its full sequence is Shufflon protein B (442 aa).

The interval 1–361 (MKKYDRGWAS…TGAILSCQSG (361 aa)) is constant region. The interval 362 to 442 (TWKSSSASIW…SYFMKITCLK (81 aa)) is variable region.

The sequence is that of Shufflon protein B from Escherichia coli.